The chain runs to 393 residues: Uroporphyrinogen decarboxylase, chloroplastic (393 aa).

The tract at residues 1 to 64 (MATACPPLSL…AGERNQREEV (64 aa)) is disordered. Over residues 23-37 (AGPNAGSSRPSAAAP) the composition is skewed to low complexity. Basic and acidic residues predominate over residues 38–50 (SERRSWRRPRPDG). Substrate is bound by residues 73–77 (RQAGR), phenylalanine 92, serine 122, aspartate 123, tyrosine 200, serine 255, and histidine 370.

Belongs to the uroporphyrinogen decarboxylase family. Homodimer.

The protein resides in the plastid. It localises to the chloroplast. The enzyme catalyses uroporphyrinogen III + 4 H(+) = coproporphyrinogen III + 4 CO2. The protein operates within porphyrin-containing compound metabolism; protoporphyrin-IX biosynthesis; coproporphyrinogen-III from 5-aminolevulinate: step 4/4. Functionally, catalyzes the decarboxylation of four acetate groups of uroporphyrinogen-III to yield coproporphyrinogen-III. In Zea mays (Maize), this protein is Uroporphyrinogen decarboxylase, chloroplastic (LES22).